Reading from the N-terminus, the 137-residue chain is Nucleoside diphosphate kinase (137 aa).

Positions 9, 57, 85, 91, 102, and 112 each coordinate ATP. The active-site Pros-phosphohistidine intermediate is His115.

It belongs to the NDK family. As to quaternary structure, homotetramer. The cofactor is Mg(2+).

The protein localises to the cytoplasm. The enzyme catalyses a 2'-deoxyribonucleoside 5'-diphosphate + ATP = a 2'-deoxyribonucleoside 5'-triphosphate + ADP. It carries out the reaction a ribonucleoside 5'-diphosphate + ATP = a ribonucleoside 5'-triphosphate + ADP. Functionally, major role in the synthesis of nucleoside triphosphates other than ATP. The ATP gamma phosphate is transferred to the NDP beta phosphate via a ping-pong mechanism, using a phosphorylated active-site intermediate. This is Nucleoside diphosphate kinase from Campylobacter jejuni subsp. doylei (strain ATCC BAA-1458 / RM4099 / 269.97).